Consider the following 144-residue polypeptide: Ribosomal RNA large subunit methyltransferase H (144 aa).

S-adenosyl-L-methionine-binding positions include Leu-63, Gly-92, and 111-116 (LSPMTF).

The protein belongs to the RNA methyltransferase RlmH family. As to quaternary structure, homodimer.

The protein resides in the cytoplasm. It carries out the reaction pseudouridine(1915) in 23S rRNA + S-adenosyl-L-methionine = N(3)-methylpseudouridine(1915) in 23S rRNA + S-adenosyl-L-homocysteine + H(+). Functionally, specifically methylates the pseudouridine at position 1915 (m3Psi1915) in 23S rRNA. The protein is Ribosomal RNA large subunit methyltransferase H of Parasynechococcus marenigrum (strain WH8102).